Here is a 430-residue protein sequence, read N- to C-terminus: NAD(P)(+) glycohydrolase toxin Tse6 (430 aa).

A run of 3 helical transmembrane segments spans residues 17 to 37, 46 to 66, and 193 to 213; these read FGVAAMVAGAVAGALIGAAVV, LAAVILAGSIAAGGLSMFQIV, and LLLAAMAGVAALVGVVAIGGL.

Interacts with Tsi6, VgrG1a, EagT6 and EF-Tu.

The protein localises to the membrane. It carries out the reaction NAD(+) + H2O = ADP-D-ribose + nicotinamide + H(+). Functionally, type VI secretion exported toxin that acts as a glycohydrolase on bacterial target cells and degrades the essential dinucleotides NAD(+) and NADP(+), thereby inducing bacteriostasis. The activity resides in the C-terminal region that is initially neutralized by the cognate immunity protein Tsi6. In Pseudomonas aeruginosa (strain ATCC 15692 / DSM 22644 / CIP 104116 / JCM 14847 / LMG 12228 / 1C / PRS 101 / PAO1), this protein is NAD(P)(+) glycohydrolase toxin Tse6.